Consider the following 600-residue polypeptide: MSRVAKYRRQVSEDPDIDSLLETLSPEEMEELEKELDVVDPDGSVPVGLRQRNQTEKQSTGVYNREAMLNFCEKETKKLMQREMSMDESKQVETKTDAKNGEERGRDASKKALGPRRDSDLGKEPKRGGLKKSFSRDRDEAGGKSGEKPKEEKIIRGIDKGRVRAAVDKKEAGKDGRGEERAVATKKEEEKKGSDRNTGLSRDKDKKREEMKEVAKKEDDEKVKGERRNTDTRKEGEKMKRAGGNTDMKKEDEKVKRGTGNTDTKKDDEKVKKNEPLHEKEAKDDSKTKTPEKQTPSGPTKPSEGPAKVEEEAAPSIFDEPLERVKNNDPEMTEVNVNNSDCITNEILVRFTEALEFNTVVKLFALANTRADDHVAFAIAIMLKANKTITSLNLDSNHITGKGILAIFRALLQNNTLTELRFHNQRHICGGKTEMEIAKLLKENTTLLKLGYHFELAGPRMTVTNLLSRNMDKQRQKRLQEQRQAQEAKGEKKDLLEVPKAGAVAKGSPKPSPQPSPKPSPKNSPKKGGAPAAPPPPPPPLAPPLIMENLKNSLSPATQRKMGDKVLPAQEKNSRDQLLAAIRSSNLKQLKKVEVPKLLQ.

The residue at position 12 (Ser12) is a Phosphoserine. Disordered regions lie at residues Val38–Gly61, Met80–Arg324, and Asp472–Asn573. Basic and acidic residues-rich tracts occupy residues Met80 to Arg127, Phe134 to Lys240, Asp247 to Lys256, Asp263 to Glu292, and Asp472 to Glu497. A phosphoserine mark is found at Ser85 and Ser135. 8 consecutive repeat copies span residues Ala165–Glu180, Arg181–Arg196, Asn197–Lys212, Glu213–Arg228, Asn229–Gly244, Asn245–Gly260, Asn261–Pro276, and Leu277–Lys293. Residues Ala165–Lys293 form an 8 X approximate tandem repeats region. The tract at residues Ser508–Lys527 is 5 X 4 AA approximate tandem repeats. 2 stretches are compositionally biased toward pro residues: residues Lys510–Lys522 and Ala532–Pro543. Ser555 bears the Phosphoserine mark. The 20-residue stretch at Ser574–Val593 folds into the WH2 domain.

It belongs to the tropomodulin family. In terms of tissue distribution, detected in lung vascular smooth muscle (at protein level). Detected in thyroid and extraocular smooth muscle, but not skeletal muscle. Detected in heart, aorta, skeletal muscle, colon, urinary bladder, uterus, stomach, and small intestine.

It localises to the cytoplasm. The protein localises to the myofibril. It is found in the sarcomere. The protein resides in the cytoskeleton. Required for proper contractility of visceral smooth muscle cells. Mediates nucleation of actin filaments. In Homo sapiens (Human), this protein is Leiomodin-1 (LMOD1).